The sequence spans 1679 residues: Maestro heat-like repeat-containing protein family member 2A (1679 aa).

HEAT repeat units follow at residues 68 to 91, 92 to 128, 190 to 229, 293 to 313, 314 to 350, 380 to 417, 422 to 459, 571 to 610, 614 to 654, 737 to 774, 848 to 887, 991 to 1028, 1219 to 1261, 1387 to 1425, and 1632 to 1669; these read ATTD…ISTQ, RKMN…QMRD, MPYM…TVQF, EQVY…GHWP, LFPS…ELHV, SYPK…ADDP, KTIY…SGFQ, PAPQ…SIAP, DMWE…SLKK, KTVL…ETVK, SALT…MKPF, GQFG…LHVS, DPLM…SHGP, KLLR…GAPR, and MDLV…CNQH.

The chain is Maestro heat-like repeat-containing protein family member 2A (Mroh2a) from Mus musculus (Mouse).